Here is a 235-residue protein sequence, read N- to C-terminus: CMP-N,N'-diacetyllegionaminic acid synthase (235 aa).

This sequence belongs to the CMP-NeuNAc synthase family.

It catalyses the reaction N,N-diacetyllegionaminate + CTP = CMP-N,N-diacetyllegionaminate + diphosphate. Functionally, involved in biosynthesis of legionaminic acid (5,7-diamino-3,5,7,9-tetradeoxy-D-glycero-D-galacto-non-2-ulosonic acid)(Leg), a sialic acid-like derivative that is incorporated into flagellin via O-linkage to Ser/Thr. Catalyzes the conversion of N,N'-diacetyllegionaminic acid (Leg5Ac7Ac) and CTP into CMP-N,N'-diacetyllegionaminic acid (CMP-Leg5Ac7Ac). This chain is CMP-N,N'-diacetyllegionaminic acid synthase (legF), found in Campylobacter jejuni subsp. jejuni serotype O:2 (strain ATCC 700819 / NCTC 11168).